A 164-amino-acid polypeptide reads, in one-letter code: MRILVLGVGNILLTDEAIGVRIVEALEQRYILPDYVEILDGGTAGMELLGDMANRDHLIIADAIVSKKNAPGTMMILRDEEVPALFTNKISPHQLGLADVLSALRFTGEFPKKLTLVGVIPESLEPHIGLTPTVEAMIEPALEQVLAALRESGVEAIPREAIHD.

Glutamate 16, aspartate 62, and histidine 93 together coordinate Ni(2+).

The protein belongs to the peptidase A31 family. The cofactor is Ni(2+).

In terms of biological role, protease involved in the C-terminal processing of HybC, the large subunit of hydrogenase 2. Specifically cleaves off a 15 amino acid peptide from the C-terminus of the precursor of HybC. The protein is Hydrogenase 2 maturation protease (hybD) of Escherichia coli (strain K12).